The following is a 631-amino-acid chain: BTB/POZ domain-containing protein At1g67900 (631 aa).

The 66-residue stretch at 28–93 (SDFTIEVSGS…CYGITITISA (66 aa)) folds into the BTB domain. The NPH3 domain maps to 200 to 509 (GWWAEDIAEL…VQVLFYEQAR (310 aa)). Residues 361–399 (QTSPPTSPLRGKKGMMDRRRRSRSAENIDLEFQESRRSS) are disordered. Residues 370–382 (RGKKGMMDRRRRS) are compositionally biased toward basic residues. Residue Tyr450 is modified to Phosphotyrosine. The residue at position 567 (Ser567) is a Phosphoserine.

It belongs to the NPH3 family.

It functions in the pathway protein modification; protein ubiquitination. May act as a substrate-specific adapter of an E3 ubiquitin-protein ligase complex (CUL3-RBX1-BTB) which mediates the ubiquitination and subsequent proteasomal degradation of target proteins. The sequence is that of BTB/POZ domain-containing protein At1g67900 from Arabidopsis thaliana (Mouse-ear cress).